A 172-amino-acid chain; its full sequence is Translation initiation factor IF-3 (172 aa).

It belongs to the IF-3 family. In terms of assembly, monomer.

Its subcellular location is the cytoplasm. Its function is as follows. IF-3 binds to the 30S ribosomal subunit and shifts the equilibrium between 70S ribosomes and their 50S and 30S subunits in favor of the free subunits, thus enhancing the availability of 30S subunits on which protein synthesis initiation begins. The polypeptide is Translation initiation factor IF-3 (Campylobacter jejuni subsp. jejuni serotype O:6 (strain 81116 / NCTC 11828)).